The chain runs to 363 residues: DNA replication and repair protein RecF (363 aa).

30–37 is a binding site for ATP; that stretch reads GDNAQGKT.

The protein belongs to the RecF family.

Its subcellular location is the cytoplasm. Its function is as follows. The RecF protein is involved in DNA metabolism; it is required for DNA replication and normal SOS inducibility. RecF binds preferentially to single-stranded, linear DNA. It also seems to bind ATP. The polypeptide is DNA replication and repair protein RecF (Syntrophotalea carbinolica (strain DSM 2380 / NBRC 103641 / GraBd1) (Pelobacter carbinolicus)).